We begin with the raw amino-acid sequence, 42 residues long: Photosystem I reaction center subunit IX (42 aa).

Residues Tyr-7–Ile-27 traverse the membrane as a helical segment.

It belongs to the PsaJ family.

The protein localises to the plastid. Its subcellular location is the chloroplast thylakoid membrane. Its function is as follows. May help in the organization of the PsaE and PsaF subunits. This chain is Photosystem I reaction center subunit IX, found in Guizotia abyssinica (Niger).